Here is a 123-residue protein sequence, read N- to C-terminus: Small ribosomal subunit protein uS13 (123 aa).

Positions 95 to 123 are disordered; sequence GLPVRGQRTKTNARTRKGPARTVAGKKKK.

The protein belongs to the universal ribosomal protein uS13 family. Part of the 30S ribosomal subunit. Forms a loose heterodimer with protein S19. Forms two bridges to the 50S subunit in the 70S ribosome.

Functionally, located at the top of the head of the 30S subunit, it contacts several helices of the 16S rRNA. In the 70S ribosome it contacts the 23S rRNA (bridge B1a) and protein L5 of the 50S subunit (bridge B1b), connecting the 2 subunits; these bridges are implicated in subunit movement. Contacts the tRNAs in the A and P-sites. In Heliobacterium modesticaldum (strain ATCC 51547 / Ice1), this protein is Small ribosomal subunit protein uS13.